The sequence spans 629 residues: Probable potassium transport system protein Kup 3 (629 aa).

12 helical membrane passes run 20-40, 61-81, 106-126, 143-163, 171-191, 209-229, 253-273, 291-311, 343-363, 372-392, 400-420, and 425-445; these read LSLSALGIVYGDIGTSPLYTF, VSLIIWTLIIIASVKYIHFAL, PFIIAVGLMGAALIYGDGTIT, PSLKYYVLPIAITILITLFAI, IGKAFGPVMAFWFLTIGILGA, GLSFLFSNGATGFFILCGVFL, WFGLAFPSLIFNYLGQAALVL, FLLPLIILSTVATIIASQAII, IYIGVVNWLLMLATLGLTIGF, AYGIAVSATMLCTTLLLFIAL, IITSGLVAGLFMIVDASFFAA, and FINGGYIPITLAIIIYSMMYI.

It belongs to the HAK/KUP transporter (TC 2.A.72) family.

The protein localises to the cell inner membrane. It catalyses the reaction K(+)(in) + H(+)(in) = K(+)(out) + H(+)(out). Its function is as follows. Transport of potassium into the cell. Likely operates as a K(+):H(+) symporter. This Legionella pneumophila subsp. pneumophila (strain Philadelphia 1 / ATCC 33152 / DSM 7513) protein is Probable potassium transport system protein Kup 3.